The primary structure comprises 106 residues: Replication restart protein PriB (106 aa).

The region spanning 4–103 (MNRLVLSGTV…LHAEQIELID (100 aa)) is the SSB domain.

This sequence belongs to the PriB family. As to quaternary structure, homodimer. Interacts with PriA and DnaT. Component of the replication restart primosome. Primosome assembly occurs via a 'hand-off' mechanism. PriA binds to replication forks, subsequently PriB then DnaT bind; DnaT then displaces ssDNA to generate the helicase loading substrate.

In terms of biological role, involved in the restart of stalled replication forks, which reloads the replicative helicase on sites other than the origin of replication; the PriA-PriB pathway is the major replication restart pathway. During primosome assembly it facilitates complex formation between PriA and DnaT on DNA; stabilizes PriA on DNA. Stimulates the DNA unwinding activity of PriA helicase. This is Replication restart protein PriB from Pectobacterium atrosepticum (strain SCRI 1043 / ATCC BAA-672) (Erwinia carotovora subsp. atroseptica).